The following is a 940-amino-acid chain: Isoleucine--tRNA ligase (940 aa).

The 'HIGH' region signature appears at 58–68 (PYANGSIHIGH). E564 contributes to the L-isoleucyl-5'-AMP binding site. The 'KMSKS' region motif lies at 605–609 (KMSKS). An ATP-binding site is contributed by K608. C903, C906, C923, and C926 together coordinate Zn(2+).

Belongs to the class-I aminoacyl-tRNA synthetase family. IleS type 1 subfamily. Monomer. Requires Zn(2+) as cofactor.

It is found in the cytoplasm. The enzyme catalyses tRNA(Ile) + L-isoleucine + ATP = L-isoleucyl-tRNA(Ile) + AMP + diphosphate. In terms of biological role, catalyzes the attachment of isoleucine to tRNA(Ile). As IleRS can inadvertently accommodate and process structurally similar amino acids such as valine, to avoid such errors it has two additional distinct tRNA(Ile)-dependent editing activities. One activity is designated as 'pretransfer' editing and involves the hydrolysis of activated Val-AMP. The other activity is designated 'posttransfer' editing and involves deacylation of mischarged Val-tRNA(Ile). This chain is Isoleucine--tRNA ligase, found in Shewanella sp. (strain MR-4).